A 178-amino-acid chain; its full sequence is S-alkylcysteine N-acetyltransferase (178 aa).

The N-acetyltransferase domain occupies 4 to 163 (DIFRLATVED…IGVMMHKVLI (160 aa)).

This sequence belongs to the acetyltransferase family.

It catalyses the reaction an S-substituted L-cysteine + acetyl-CoA = an N-acetyl-L-cysteine-S-conjugate + CoA + H(+). The catalysed reaction is S-benzyl-L-cysteine + acetyl-CoA = N-acetyl-S-benzyl-L-cysteine + CoA + H(+). The enzyme catalyses S-methyl-L-cysteine + acetyl-CoA = N-acetyl-S-methyl-L-cysteine + CoA + H(+). It functions in the pathway amino-acid metabolism. Functionally, involved in a cysteine salvage pathway from S-alkylcysteine. Catalyzes the first step in this pathway, i.e. the amine acetylation of an S-alkylcysteine with a preference for S-benzyl-L-cysteine over S-methyl-L-cysteine. This pathway is likely important in the catabolism of alkylated cysteine generated by proteolysis of alkylated glutathione formed in the detoxification of a wide range of electrophiles. This is S-alkylcysteine N-acetyltransferase from Bacillus subtilis (strain 168).